A 343-amino-acid polypeptide reads, in one-letter code: Thromboxane A2 receptor (343 aa).

Topologically, residues methionine 1–tryptophan 29 are extracellular. Asparagine 4 and asparagine 16 each carry an N-linked (GlcNAc...) asparagine glycan. The chain crosses the membrane as a helical span at residues phenylalanine 30–alanine 52. Over arginine 53–phenylalanine 66 the chain is Cytoplasmic. A helical membrane pass occupies residues leucine 67–threonine 87. The Extracellular segment spans residues glutamine 88 to histidine 106. Cysteine 105 and cysteine 183 are oxidised to a cystine. Residues phenylalanine 107–serine 128 traverse the membrane as a helical segment. Residues glutamate 129–alanine 149 lie on the Cytoplasmic side of the membrane. Residues tryptophan 150–glycine 172 form a helical membrane-spanning segment. The Extracellular portion of the chain corresponds to histidine 173–aspartate 193. The chain crosses the membrane as a helical span at residues valine 194–valine 219. Over alanine 220–glutamine 246 the chain is Cytoplasmic. Residues leucine 247–leucine 270 form a helical membrane-spanning segment. Over glutamine 271–glutamine 289 the chain is Extracellular. The helical transmembrane segment at leucine 290–phenylalanine 311 threads the bilayer. At arginine 312–histidine 343 the chain is on the cytoplasmic side. A phosphoserine mark is found at serine 329 and serine 331.

Belongs to the G-protein coupled receptor 1 family. As to quaternary structure, interacts with RPGRIP1L. Interacts with RACK1; the interaction regulates TBXA2R cell surface expression.

Its subcellular location is the cell membrane. In terms of biological role, receptor for thromboxane A2 (TXA2), a potent stimulator of platelet aggregation. The activity of this receptor is mediated by a G-protein that activates a phosphatidylinositol-calcium second messenger system. In the kidney, the binding of TXA2 to glomerular TP receptors causes intense vasoconstriction. Activates phospholipase C and adenylyl cyclase. This Bos taurus (Bovine) protein is Thromboxane A2 receptor (TBXA2R).